Consider the following 348-residue polypeptide: Dihydroorotase (348 aa).

His-17 and His-19 together coordinate Zn(2+). Residues 19 to 21 and Asn-45 each bind substrate; that span reads HLR. The Zn(2+) site is built by Lys-103, His-140, and His-178. Lys-103 carries the N6-carboxylysine modification. His-140 is a substrate binding site. Leu-223 serves as a coordination point for substrate. Asp-251 provides a ligand contact to Zn(2+). Asp-251 is a catalytic residue. Substrate-binding residues include His-255 and Ala-267.

Belongs to the metallo-dependent hydrolases superfamily. DHOase family. Class II DHOase subfamily. In terms of assembly, homodimer. The cofactor is Zn(2+).

It carries out the reaction (S)-dihydroorotate + H2O = N-carbamoyl-L-aspartate + H(+). It participates in pyrimidine metabolism; UMP biosynthesis via de novo pathway; (S)-dihydroorotate from bicarbonate: step 3/3. Its function is as follows. Catalyzes the reversible cyclization of carbamoyl aspartate to dihydroorotate. The protein is Dihydroorotase of Yersinia pestis.